A 993-amino-acid chain; its full sequence is DNA-binding protein SMUBP-2 (993 aa).

Ala-2 carries the N-acetylalanine modification. ATP is bound by residues 214-221 (GPPGTGKT), Gln-403, Tyr-442, and Glu-571. The SS DNA-binding stretch occupies residues 638–785 (TAFEYLDDIV…KRRFITVSKR (148 aa)). Disordered stretches follow at residues 651-723 (YSHE…VESQ), 782-828 (VSKR…PDQP), and 841-879 (VRSAQGQPASKEQQASGQQKLPEKKKKKAKGHPATDLPT). 2 stretches are compositionally biased toward polar residues: residues 653–662 (HENSQGSSHA) and 669–681 (PATSTRTGSQRQE). The 64-residue stretch at 723–786 (QDGVDHFRAM…RRFITVSKRA (64 aa)) folds into the R3H domain. The segment covering 818–828 (PPREQRGPDQP) has biased composition (basic and acidic residues). Positions 842 to 859 (RSAQGQPASKEQQASGQQ) are enriched in polar residues. The Nuclear localization signal motif lies at 864–868 (KKKKK). The segment at 891-940 (VKADNTCGFAKCTAGVTTLGQFCQLCSRRYCLSHHLPEIHGCGERARAHA) adopts an AN1-type zinc-finger fold. 8 residues coordinate Zn(2+): Cys-897, Cys-902, Cys-913, Cys-916, Cys-921, His-924, His-930, and Cys-932. The interval 971–993 (RRLDKKLSELSNQRTSRRKERGT) is disordered.

This sequence belongs to the DNA2/NAM7 helicase family. Homooligomer. Interacts with RUVBL1. Interacts with RUVBL2. Interacts with GTF3C1. Interacts with ABT1. Interacts with ribosomes. In terms of tissue distribution, expressed in all tissues examined. Expressed in the developing and adult human brain, with highest expression in the cerebellum. Moderately expressed in fibroblasts.

The protein resides in the nucleus. It is found in the cytoplasm. Its subcellular location is the cell projection. The protein localises to the axon. The enzyme catalyses ATP + H2O = ADP + phosphate + H(+). Its function is as follows. 5' to 3' helicase that unwinds RNA and DNA duplexes in an ATP-dependent reaction. Specific to 5'-phosphorylated single-stranded guanine-rich sequences. May play a role in RNA metabolism, ribosome biogenesis or initiation of translation. May play a role in regulation of transcription. Interacts with tRNA-Tyr. In Homo sapiens (Human), this protein is DNA-binding protein SMUBP-2 (IGHMBP2).